Reading from the N-terminus, the 452-residue chain is Pentatricopeptide repeat-containing protein At2g30780 (452 aa).

PPR repeat units follow at residues 137–171 (TASVYNSLMSVYMWNGLAEECQSLFKDFRRQTHCA), 173–207 (TVVTYNILVSVYGRLLMVKNMEAAFEELQKVKLPP), 208–242 (NSVTYNFLIAGYMTAWNWDKMEATFQEMKRGPVEP), 243–273 (DTDTYQLMLRGYANSGNLNRMEEMYEVIKDQ), 350–384 (KSSIMRAIIAAYFRCNEVDNLANFVKRAESAGWKL), 385–419 (CRSLYHCKIMMYGSQKRFEEMEGVVNEMAETNYGL), and 420–452 (VTKTFAIMIKAYKNHGMESDAEKVKGKMLKRGL).

This sequence belongs to the PPR family. P subfamily.

The sequence is that of Pentatricopeptide repeat-containing protein At2g30780 from Arabidopsis thaliana (Mouse-ear cress).